The following is a 237-amino-acid chain: Zinc finger AN1 domain-containing stress-associated protein 14 (237 aa).

Positions 1–31 (MATKRKCPANGDDGGVADLEPVAGGSFASPP) are disordered. Residues 171–217 (QPEANRCATCRRKVGLTGFKCRCGGTFCGGHRYADEHGCGFDYKSSG) form an AN1-type zinc finger. Cys-177, Cys-180, Cys-191, Cys-193, Cys-198, His-201, His-207, and Cys-209 together coordinate Zn(2+).

Functionally, may be involved in environmental stress response. This is Zinc finger AN1 domain-containing stress-associated protein 14 (SAP14) from Oryza sativa subsp. japonica (Rice).